The sequence spans 492 residues: N-succinylglutamate 5-semialdehyde dehydrogenase (492 aa).

220–225 (GSASTG) contributes to the NAD(+) binding site. Active-site residues include E243 and C277.

The protein belongs to the aldehyde dehydrogenase family. AstD subfamily.

It catalyses the reaction N-succinyl-L-glutamate 5-semialdehyde + NAD(+) + H2O = N-succinyl-L-glutamate + NADH + 2 H(+). Its pathway is amino-acid degradation; L-arginine degradation via AST pathway; L-glutamate and succinate from L-arginine: step 4/5. Catalyzes the NAD-dependent reduction of succinylglutamate semialdehyde into succinylglutamate. The sequence is that of N-succinylglutamate 5-semialdehyde dehydrogenase from Salmonella heidelberg (strain SL476).